A 159-amino-acid polypeptide reads, in one-letter code: Eukaryotic translation initiation factor 5A (159 aa).

Lys-55 is modified (hypusine).

It belongs to the eIF-5A family. Post-translationally, lys-55 undergoes hypusination, a unique post-translational modification that consists in the addition of a butylamino group from spermidine to lysine side chain, leading to the formation of the unusual amino acid hypusine. eIF-5As are the only known proteins to undergo this modification, which is essential for their function.

It localises to the cytoplasm. Translation factor that promotes translation elongation and termination, particularly upon ribosome stalling at specific amino acid sequence contexts. Binds between the exit (E) and peptidyl (P) site of the ribosome and promotes rescue of stalled ribosome: specifically required for efficient translation of polyproline-containing peptides as well as other motifs that stall the ribosome. Acts as a ribosome quality control (RQC) cofactor by joining the RQC complex to facilitate peptidyl transfer during CAT tailing step. This is Eukaryotic translation initiation factor 5A (eif5a) from Dictyostelium discoideum (Social amoeba).